A 210-amino-acid polypeptide reads, in one-letter code: dITP/XTP pyrophosphatase (210 aa).

Residue 16-21 participates in substrate binding; sequence SNNKGK. D79 functions as the Proton acceptor in the catalytic mechanism. D79 serves as a coordination point for Mg(2+). Substrate contacts are provided by residues S80, 166–169, K189, and 194–195; these read FGYD and HR.

Belongs to the HAM1 NTPase family. Homodimer. It depends on Mg(2+) as a cofactor.

It catalyses the reaction XTP + H2O = XMP + diphosphate + H(+). The catalysed reaction is dITP + H2O = dIMP + diphosphate + H(+). The enzyme catalyses ITP + H2O = IMP + diphosphate + H(+). Pyrophosphatase that catalyzes the hydrolysis of nucleoside triphosphates to their monophosphate derivatives, with a high preference for the non-canonical purine nucleotides XTP (xanthosine triphosphate), dITP (deoxyinosine triphosphate) and ITP. Seems to function as a house-cleaning enzyme that removes non-canonical purine nucleotides from the nucleotide pool, thus preventing their incorporation into DNA/RNA and avoiding chromosomal lesions. In Acinetobacter baylyi (strain ATCC 33305 / BD413 / ADP1), this protein is dITP/XTP pyrophosphatase.